The following is a 1130-amino-acid chain: BTB/POZ domain-containing protein 7 (1130 aa).

A compositionally biased stretch (polar residues) spans 1–10 (MGANASNYPH). The segment at 1–24 (MGANASNYPHSCSPRVGGNSQAQQ) is disordered. Gly2 carries N-myristoyl glycine lipidation. BTB domains follow at residues 142-211 (TDVD…GMED) and 247-341 (YDVV…DLSV). The BACK domain occupies 413–479 (YGSKWVHRQA…WGEHQLMKRI (67 aa)). Ser722 is modified (phosphoserine). Disordered regions lie at residues 898-1050 (SEAG…PAHV) and 1062-1130 (FGLT…KSAL). Composition is skewed to basic and acidic residues over residues 923-935 (PTLEQKADGRENQ) and 996-1005 (KKQEDPRREY). The residue at position 1008 (Ser1008) is a Phosphoserine. Over residues 1063-1075 (GLTSNRPPSHSAC) the composition is skewed to polar residues. Basic and acidic residues-rich tracts occupy residues 1080–1090 (LEERSSRRLTD) and 1101–1112 (RNADLERGDSIS).

In terms of tissue distribution, specifically expressed in embryonic epithelia.

Its subcellular location is the nucleus. Its function is as follows. Acts as a mediator of epithelial dynamics and organ branching by promoting cleft progression. Induced following accumulation of fibronectin in forming clefts, leading to local expression of the cell-scattering SNAIL2 and suppression of E-cadherin levels, thereby altering cell morphology and reducing cell-cell adhesion. This stimulates cell separation at the base of forming clefts by local, dynamic intercellular gap formation and promotes cleft progression. This Mus musculus (Mouse) protein is BTB/POZ domain-containing protein 7 (Btbd7).